The chain runs to 71 residues: Large ribosomal subunit protein bL31 (71 aa).

The Zn(2+) site is built by cysteine 16, cysteine 18, cysteine 37, and cysteine 40.

Belongs to the bacterial ribosomal protein bL31 family. Type A subfamily. As to quaternary structure, part of the 50S ribosomal subunit. Requires Zn(2+) as cofactor.

Binds the 23S rRNA. The polypeptide is Large ribosomal subunit protein bL31 (Pseudomonas aeruginosa (strain LESB58)).